Here is a 474-residue protein sequence, read N- to C-terminus: Trigger factor (474 aa).

Positions 171 to 258 (GDVAVIDFQG…LKELKTRDLP (88 aa)) constitute a PPIase FKBP-type domain. Residues 441-474 (TEVDAASATVETTATETAEEAPEAPKAKKGKKKA) are disordered. The segment covering 444–456 (DAASATVETTATE) has biased composition (low complexity).

It belongs to the FKBP-type PPIase family. Tig subfamily.

The protein resides in the cytoplasm. It catalyses the reaction [protein]-peptidylproline (omega=180) = [protein]-peptidylproline (omega=0). In terms of biological role, involved in protein export. Acts as a chaperone by maintaining the newly synthesized protein in an open conformation. Functions as a peptidyl-prolyl cis-trans isomerase. This is Trigger factor from Synechococcus sp. (strain ATCC 27144 / PCC 6301 / SAUG 1402/1) (Anacystis nidulans).